A 389-amino-acid chain; its full sequence is Succinate--CoA ligase [ADP-forming] subunit beta (389 aa).

The ATP-grasp domain occupies 9–236; that stretch reads KELFAKHGVP…RDATDPLELK (228 aa). ATP contacts are provided by residues K45, 52-54, S94, and E99; that span reads GRG. Mg(2+)-binding residues include N191 and D205. Residues N256 and 318 to 320 each bind substrate; that span reads GIT.

Belongs to the succinate/malate CoA ligase beta subunit family. In terms of assembly, heterotetramer of two alpha and two beta subunits. Mg(2+) serves as cofactor.

It catalyses the reaction succinate + ATP + CoA = succinyl-CoA + ADP + phosphate. It carries out the reaction GTP + succinate + CoA = succinyl-CoA + GDP + phosphate. Its pathway is carbohydrate metabolism; tricarboxylic acid cycle; succinate from succinyl-CoA (ligase route): step 1/1. Succinyl-CoA synthetase functions in the citric acid cycle (TCA), coupling the hydrolysis of succinyl-CoA to the synthesis of either ATP or GTP and thus represents the only step of substrate-level phosphorylation in the TCA. The beta subunit provides nucleotide specificity of the enzyme and binds the substrate succinate, while the binding sites for coenzyme A and phosphate are found in the alpha subunit. This is Succinate--CoA ligase [ADP-forming] subunit beta from Rhodococcus erythropolis (strain PR4 / NBRC 100887).